The following is a 327-amino-acid chain: Elongation factor P--(R)-beta-lysine ligase (327 aa).

78 to 80 (SPE) contacts substrate. ATP-binding positions include 102–104 (RNQ) and Asn-111. Tyr-120 provides a ligand contact to substrate. 246 to 247 (EL) is a binding site for ATP. Glu-253 contacts substrate. Gly-302 provides a ligand contact to ATP.

Belongs to the class-II aminoacyl-tRNA synthetase family. EpmA subfamily. In terms of assembly, homodimer.

The enzyme catalyses D-beta-lysine + L-lysyl-[protein] + ATP = N(6)-((3R)-3,6-diaminohexanoyl)-L-lysyl-[protein] + AMP + diphosphate + H(+). Its function is as follows. With EpmB is involved in the beta-lysylation step of the post-translational modification of translation elongation factor P (EF-P). Catalyzes the ATP-dependent activation of (R)-beta-lysine produced by EpmB, forming a lysyl-adenylate, from which the beta-lysyl moiety is then transferred to the epsilon-amino group of a conserved specific lysine residue in EF-P. This is Elongation factor P--(R)-beta-lysine ligase from Baumannia cicadellinicola subsp. Homalodisca coagulata.